We begin with the raw amino-acid sequence, 417 residues long: Arginine biosynthesis bifunctional protein ArgJ (417 aa).

Residues threonine 162, lysine 188, threonine 199, glutamate 289, asparagine 412, and serine 417 each contribute to the substrate site. Catalysis depends on threonine 199, which acts as the Nucleophile.

The protein belongs to the ArgJ family. In terms of assembly, heterotetramer of two alpha and two beta chains.

It is found in the cytoplasm. The catalysed reaction is N(2)-acetyl-L-ornithine + L-glutamate = N-acetyl-L-glutamate + L-ornithine. It carries out the reaction L-glutamate + acetyl-CoA = N-acetyl-L-glutamate + CoA + H(+). It functions in the pathway amino-acid biosynthesis; L-arginine biosynthesis; L-ornithine and N-acetyl-L-glutamate from L-glutamate and N(2)-acetyl-L-ornithine (cyclic): step 1/1. The protein operates within amino-acid biosynthesis; L-arginine biosynthesis; N(2)-acetyl-L-ornithine from L-glutamate: step 1/4. Catalyzes two activities which are involved in the cyclic version of arginine biosynthesis: the synthesis of N-acetylglutamate from glutamate and acetyl-CoA as the acetyl donor, and of ornithine by transacetylation between N(2)-acetylornithine and glutamate. This chain is Arginine biosynthesis bifunctional protein ArgJ, found in Nitrobacter winogradskyi (strain ATCC 25391 / DSM 10237 / CIP 104748 / NCIMB 11846 / Nb-255).